Here is a 213-residue protein sequence, read N- to C-terminus: Sclerostin (213 aa).

An N-terminal signal peptide occupies residues 1–28 (MQLSLAPCLACLLVHAAFVAVESQGWQA). N-linked (GlcNAc...) asparagine glycosylation is present at asparagine 53. Disulfide bonds link cysteine 80–cysteine 134, cysteine 94–cysteine 148, cysteine 105–cysteine 165, and cysteine 109–cysteine 167. In terms of domain architecture, CTCK spans 82–172 (ELHYTRFVTD…ASCKCKRLTR (91 aa)). Asparagine 175 is a glycosylation site (N-linked (GlcNAc...) asparagine). The segment at 178–213 (ELKDFGPETARPQKGRKPRPRARGAKANQAELENAY) is disordered. Over residues 190–201 (QKGRKPRPRARG) the composition is skewed to basic residues.

It belongs to the sclerostin family. In terms of assembly, interacts with LRP4 (via the extracellular domain); the interaction facilitates the inhibition of Wnt signaling. Interacts with LRP5 (via the first two YWTD-EGF repeat domains); the interaction inhibits Wnt-mediated signaling. Interacts with LRP6.

It is found in the secreted. In terms of biological role, negative regulator of bone growth that acts through inhibition of Wnt signaling and bone formation. The chain is Sclerostin from Rattus norvegicus (Rat).